The following is a 157-amino-acid chain: Probable succinate transporter subunit YjjB (157 aa).

Helical transmembrane passes span 6–26 (IILT…GFAM), 51–71 (VLMI…ILVG), 87–107 (VFTV…VAMI), and 129–149 (FLKA…PGLW).

Belongs to the ThrE exporter (TC 2.A.79) family. The transporter is composed of YjjB and YjjP.

The protein resides in the cell inner membrane. Functionally, involved in succinate export with YjjP. Both proteins are required for export. This chain is Probable succinate transporter subunit YjjB, found in Proteus mirabilis (strain HI4320).